We begin with the raw amino-acid sequence, 59 residues long: Large ribosomal subunit protein uL30 (59 aa).

The protein belongs to the universal ribosomal protein uL30 family. Part of the 50S ribosomal subunit.

The chain is Large ribosomal subunit protein uL30 from Persephonella marina (strain DSM 14350 / EX-H1).